Consider the following 784-residue polypeptide: E3 UFM1-protein ligase 1 homolog (784 aa).

A compositionally biased stretch (basic and acidic residues) spans 398 to 414 (QEVDHGVMEEEKADKRE). The interval 398–472 (QEVDHGVMEE…ASNKKGGKDP (75 aa)) is disordered.

Belongs to the UFL1 family.

Its function is as follows. E3 UFM1-protein ligase that mediates ufmylation of target proteins. The protein is E3 UFM1-protein ligase 1 homolog of Anopheles gambiae (African malaria mosquito).